We begin with the raw amino-acid sequence, 748 residues long: Elongation factor G, mitochondrial (748 aa).

The N-terminal 14 residues, 1–14 (MTISSFLRVRHSLA), are a transit peptide targeting the mitochondrion. Positions 40 to 318 (ERIRNIGISA…VLNYLPHPGE (279 aa)) constitute a tr-type G domain. Residues 49 to 56 (AHIDSGKT), 116 to 120 (DTPGH), and 170 to 173 (NKLD) contribute to the GTP site.

The protein belongs to the TRAFAC class translation factor GTPase superfamily. Classic translation factor GTPase family. EF-G/EF-2 subfamily.

It localises to the mitochondrion. The protein operates within protein biosynthesis; polypeptide chain elongation. In terms of biological role, mitochondrial GTPase that catalyzes the GTP-dependent ribosomal translocation step during translation elongation. During this step, the ribosome changes from the pre-translocational (PRE) to the post-translocational (POST) state as the newly formed A-site-bound peptidyl-tRNA and P-site-bound deacylated tRNA move to the P and E sites, respectively. Catalyzes the coordinated movement of the two tRNA molecules, the mRNA and conformational changes in the ribosome. The chain is Elongation factor G, mitochondrial from Aedes aegypti (Yellowfever mosquito).